The primary structure comprises 295 residues: Probable xyloglucan endotransglucosylase/hydrolase protein (295 aa).

The signal sequence occupies residues 1–21 (MGVKGLLFSIVLINLSLLGLC). A GH16 domain is found at 22-220 (GYPRKPVDVP…WSNAPFTASY (199 aa)). The active-site Nucleophile is Glu106. Residue Glu110 is the Proton donor of the active site. Glu110 contacts xyloglucan. Residue Asn114 is glycosylated (N-linked (GlcNAc...) asparagine). Xyloglucan-binding positions include 123 to 125 (QTN), 133 to 135 (DRE), 199 to 200 (DW), and Gly204. Cystine bridges form between Cys228–Cys239 and Cys276–Cys289. A xyloglucan-binding site is contributed by Arg281.

The protein belongs to the glycosyl hydrolase 16 family. XTH group 1 subfamily. In terms of processing, contains at least one intrachain disulfide bond essential for its enzymatic activity.

The protein resides in the secreted. Its subcellular location is the cell wall. It localises to the extracellular space. The protein localises to the apoplast. It carries out the reaction breaks a beta-(1-&gt;4) bond in the backbone of a xyloglucan and transfers the xyloglucanyl segment on to O-4 of the non-reducing terminal glucose residue of an acceptor, which can be a xyloglucan or an oligosaccharide of xyloglucan.. In terms of biological role, catalyzes xyloglucan endohydrolysis (XEH) and/or endotransglycosylation (XET). Cleaves and religates xyloglucan polymers, an essential constituent of the primary cell wall, and thereby participates in cell wall construction of growing tissues. The protein is Probable xyloglucan endotransglucosylase/hydrolase protein (XTH) of Nicotiana tabacum (Common tobacco).